We begin with the raw amino-acid sequence, 916 residues long: MGKAAAPSRGGGCGGRSRGLSSLFTVVPCLSCHTAAPGMSASTSGSGPEPKPQPQPVPEPERGPLSEQVSEAVSEAVPRSEPVSETTSEPEPGAGQPSELLQGSRPGSESSSGVGAGPFTKAASEPLSRAVGSATFLRPESGSLPALKPLPLLRPGQAKTPLGVPMSGTGTTSSAPLALLPLDSFEGWLLKWTNYLKGYQRRWFVLGNGLLSYYRNQGEMAHTCRGTINLSTAHIDTEDSCGILLTSGARSYHLKASSEVDRQQWITALELAKAKAVRVMNTHSDDSGDDDEATTPADKSELHHTLKNLSLKLDDLSTCNDLIAKHGAALQRSLTELDGLKIPSESGEKLKVVNERATLFRITSNAMINACRDFLELAEIHSRKWQRALQYEQEQRVHLEETIEQLAKQHNSLERAFHSAPGRPANPSKSFIEGSLLTPKGEDSEEDEDTEYFDAMEDSTSFITVITEAKEDSRKAEGSTGTSSVDWSSADNVLDGASLVPKGSSKVKRRVRIPNKPNYSLNLWSIMKNCIGRELSRIPMPVNFNEPLSMLQRLTEDLEYHHLLDKAVHCTSSVEQMCLVAAFSVSSYSTTVHRIAKPFNPMLGETFELDRLDDMGLRSLCEQVSHHPPSAAHYVFSKHGWSLWQEITISSKFRGKYISIMPLGAIHLEFQASGNHYVWRKSTSTVHNIIVGKLWIDQSGDIEIVNHKTNDRCQLKFLPYSYFSKEAARKVTGVVSDSQGKAHYVLSGSWDEQMECSKVMHSSPSSPSSDGKQKTVYQTLSAKLLWKKYPLPENAENMYYFSELALTLNEHEEGVAPTDSRLRPDQRLMEKGRWDEANTEKQRLEEKQRLSRRRRLEACGPGSSCSSEEEKEADAYTPLWFEKRLDPLTGEMACVYKGGYWEAKEKQDWHMCPNIF.

Disordered stretches follow at residues methionine 1–leucine 20, threonine 34–lysine 121, and proline 139–glycine 163. Pro residues predominate over residues glutamate 49–proline 58. Over residues arginine 79–proline 92 the composition is skewed to low complexity. Over residues glutamate 99–glycine 113 the composition is skewed to polar residues. Residues leucine 144–proline 155 show a composition bias toward low complexity. The region spanning leucine 182 to alanine 274 is the PH domain. Disordered stretches follow at residues threonine 282–glutamate 301 and phenylalanine 417–glutamate 448. A Phosphoserine modification is found at serine 287. Position 763 is a phosphoserine (serine 763). Residues glutamate 813–glutamine 842 form a disordered region.

Belongs to the OSBP family. As to quaternary structure, interacts with CCDC159. In terms of tissue distribution, expressed mainly in retina, testis, and fetal liver.

Its subcellular location is the membrane. The protein localises to the cytoplasmic vesicle. It localises to the secretory vesicle. The protein resides in the acrosome. Binds 7-ketocholesterol. Acts during spermatid development where its function is required prior to the removal of cytoplasm from the sperm head. The protein is Oxysterol-binding protein 2 (OSBP2) of Homo sapiens (Human).